The following is a 167-amino-acid chain: MPLLDSFKVDHTIMPAPAVRRAKGMKTPSGDDITVFDLRFVAPNKEILSSEGIHTLEHLFAGFMRDHLNSKDVEIIDISPMGCRTGFYMSLIGSPDEQRVADAWSASMQDILGVKEQKDIPELNVYQCGTYKMHSLEDAKEIASKVLERRIGVMDNDALALDESKIG.

Fe cation contacts are provided by histidine 54, histidine 58, and cysteine 128.

It belongs to the LuxS family. As to quaternary structure, homodimer. It depends on Fe cation as a cofactor.

It carries out the reaction S-(5-deoxy-D-ribos-5-yl)-L-homocysteine = (S)-4,5-dihydroxypentane-2,3-dione + L-homocysteine. In terms of biological role, involved in the synthesis of autoinducer 2 (AI-2) which is secreted by bacteria and is used to communicate both the cell density and the metabolic potential of the environment. The regulation of gene expression in response to changes in cell density is called quorum sensing. Catalyzes the transformation of S-ribosylhomocysteine (RHC) to homocysteine (HC) and 4,5-dihydroxy-2,3-pentadione (DPD). The sequence is that of S-ribosylhomocysteine lyase from Sulfurimonas denitrificans (strain ATCC 33889 / DSM 1251) (Thiomicrospira denitrificans (strain ATCC 33889 / DSM 1251)).